A 177-amino-acid polypeptide reads, in one-letter code: FCS-Like Zinc finger 1 (177 aa).

Over residues 22–46 (SLSEMEAGFSGNNNNSNNHGNPQNG) the composition is skewed to low complexity. Disordered regions lie at residues 22–49 (SLSE…GVVS) and 134–177 (ERDE…VAAA). An FLZ-type zinc finger spans residues 96 to 140 (HFLDSCFLCKKPLGDNRDIYMYRGDTPFCSEECRQEQIERDEAKE). Composition is skewed to basic and acidic residues over residues 134-143 (ERDEAKEKKQ) and 154-168 (RRKE…RDYA).

The protein belongs to the FLZ family. In terms of assembly, interacts with KIN10 and KIN11 via its FLZ-type zinc finger domain. Interacts with KINB1, KINB2 and KINB3 via its N-terminal part. Interacts with DSP3 and BBX21 via its FLZ-type zinc finger domain. Forms heterodimer with FLZ7 and FLZ15 in vitro.

Its subcellular location is the nucleus. The protein resides in the cytoplasm. May act as an adapter to facilitate the interaction of SnRK1 complex with effector proteins, conferring tissue- and stimulus-type specific differences in the SnRK1 regulation pathway. In Arabidopsis thaliana (Mouse-ear cress), this protein is FCS-Like Zinc finger 1.